Here is a 233-residue protein sequence, read N- to C-terminus: Ion-translocating oxidoreductase complex subunit E (233 aa).

Transmembrane regions (helical) follow at residues 22-42 (LLGL…LGLG), 69-89 (IPIY…LINA), 93-113 (GLYQ…IVVG), 128-148 (ALDG…LGSI), and 182-202 (PMLL…LLAA).

Belongs to the NqrDE/RnfAE family. The complex is composed of six subunits: RnfA, RnfB, RnfC, RnfD, RnfE and RnfG.

The protein resides in the cell inner membrane. Part of a membrane-bound complex that couples electron transfer with translocation of ions across the membrane. This is Ion-translocating oxidoreductase complex subunit E from Erwinia tasmaniensis (strain DSM 17950 / CFBP 7177 / CIP 109463 / NCPPB 4357 / Et1/99).